The chain runs to 321 residues: MATH domain and coiled-coil domain-containing protein At3g58260 (321 aa).

Residues Asn-6–Val-135 enclose the MATH domain. A coiled-coil region spans residues Lys-232–Gly-283.

The sequence is that of MATH domain and coiled-coil domain-containing protein At3g58260 from Arabidopsis thaliana (Mouse-ear cress).